The following is a 314-amino-acid chain: Hydroxyacyl-coenzyme A dehydrogenase, mitochondrial (314 aa).

Residues 1–12 constitute a mitochondrion transit peptide; that stretch reads MAFVTRQFLRSM. Residues 34 to 39 and Asp-57 each bind NAD(+); that span reads GGGLMG. A CoA-binding site is contributed by Ser-73. Lys-75 bears the N6-acetyllysine mark. Lys-80 contributes to the CoA binding site. An N6-succinyllysine modification is found at Lys-80. Residues Lys-81 and Lys-87 each carry the N6-acetyllysine; alternate modification. N6-succinyllysine; alternate occurs at positions 81 and 87. Glu-122 contacts NAD(+). Lys-125 carries the post-translational modification N6-acetyllysine. Lys-127 is a binding site for NAD(+). An N6-(2-hydroxyisobutyryl)lysine modification is found at Lys-127. N6-acetyllysine; alternate is present on Lys-136. Position 136 is an N6-succinyllysine; alternate (Lys-136). NAD(+) contacts are provided by Ser-149 and Asn-173. Ser-149 contacts CoA. Lys-179 carries the N6-acetyllysine modification. Lys-185, Lys-192, and Lys-202 each carry N6-acetyllysine; alternate. N6-succinyllysine; alternate is present on residues Lys-185, Lys-192, and Lys-202. The residue at position 206 (Lys-206) is an N6-succinyllysine. N6-acetyllysine; alternate occurs at positions 212 and 241. An N6-succinyllysine; alternate mark is found at Lys-212 and Lys-241. Position 305 (Lys-305) interacts with NAD(+). Position 312 is an N6-acetyllysine; alternate (Lys-312). At Lys-312 the chain carries N6-succinyllysine; alternate.

Belongs to the 3-hydroxyacyl-CoA dehydrogenase family. Homodimer. Interacts with GLUD1; this interaction inhibits the activation of glutamate dehydrogenase 1 (GLUD1). Succinylation at Lys-81, adjacent to a coenzyme A binding site. Desuccinylated by SIRT5. Expressed in liver, kidney, brain, and pancreatic islets.

Its subcellular location is the mitochondrion matrix. The protein resides in the nucleus. It localises to the cytoplasm. The protein localises to the cytosol. The catalysed reaction is a (3S)-3-hydroxyacyl-CoA + NAD(+) = a 3-oxoacyl-CoA + NADH + H(+). It carries out the reaction (3S)-3-hydroxybutanoyl-CoA + NAD(+) = acetoacetyl-CoA + NADH + H(+). It catalyses the reaction (3S)-hydroxydecanoyl-CoA + NAD(+) = 3-oxodecanoyl-CoA + NADH + H(+). The enzyme catalyses (3S)-hydroxyhexadecanoyl-CoA + NAD(+) = 3-oxohexadecanoyl-CoA + NADH + H(+). It participates in lipid metabolism; fatty acid beta-oxidation. Mitochondrial fatty acid beta-oxidation enzyme that catalyzes the third step of the beta-oxidation cycle for medium and short-chain 3-hydroxy fatty acyl-CoAs (C4 to C10). Plays a role in the control of insulin secretion by inhibiting the activation of glutamate dehydrogenase 1 (GLUD1), an enzyme that has an important role in regulating amino acid-induced insulin secretion. Plays a role in the maintenance of normal spermatogenesis through the reduction of fatty acid accumulation in the testes. In terms of biological role, inhibits cell proliferation. In Mus musculus (Mouse), this protein is Hydroxyacyl-coenzyme A dehydrogenase, mitochondrial (Hadh).